Consider the following 321-residue polypeptide: Glucokinase (321 aa).

8–13 provides a ligand contact to ATP; sequence ADIGGT.

Belongs to the bacterial glucokinase family.

It localises to the cytoplasm. The catalysed reaction is D-glucose + ATP = D-glucose 6-phosphate + ADP + H(+). This Paramagnetospirillum magneticum (strain ATCC 700264 / AMB-1) (Magnetospirillum magneticum) protein is Glucokinase.